We begin with the raw amino-acid sequence, 249 residues long: Zinc finger protein mnm-2 (249 aa).

Residues 20–65 (PKEELETEEEDEEEDEEEELSSSEVTSENDMETESASSSASSVGQP) form a disordered region. Over residues 24 to 52 (LETEEEDEEEDEEEELSSSEVTSENDMET) the composition is skewed to acidic residues. C2H2-type zinc fingers lie at residues 168–190 (YRCD…KRIH), 196–218 (FKCE…RLTH), and 224–246 (YVCG…MRTH).

In larva and adult, expressed in the M3 pharyngeal motor neurons, extrapharyngeal neurons in the head, the PQR tail neurons, rectal cells, vulva cells, the spermetheca-uterine valve, body wall muscle cells and neurons of the ventral nerve cord. In the embryo, expressed in pharyngeal cells, extrapharyngeal head neurons and within the tail. Expressed in body wall muscle cells during late embryonic stages. Expressed in the mother cells of the M2 and M3 pharyngeal motor neurons precursor cells at the embryonic bean stage and subsequently in the M2 and M3 cells as they are born. Expression is sustained only in the two M3 cells up to at least the 5-day-old adult. In contrast, expression gradually declines in the M2 cells beginning from the time of their birth, and is completely undetectable by the time of hatching.

The protein resides in the nucleus. Required in the M3 pharyngeal motor neuron to guide the growth cone of the sister M2 motor neuron during axon development. This Caenorhabditis elegans protein is Zinc finger protein mnm-2.